A 136-amino-acid chain; its full sequence is Large-conductance mechanosensitive channel (136 aa).

2 helical membrane passes run 9-29 (AFAS…GAAF) and 79-99 (IQTV…LKAI).

Belongs to the MscL family. Homopentamer.

The protein localises to the cell inner membrane. Its function is as follows. Channel that opens in response to stretch forces in the membrane lipid bilayer. May participate in the regulation of osmotic pressure changes within the cell. The sequence is that of Large-conductance mechanosensitive channel from Shewanella sp. (strain W3-18-1).